A 94-amino-acid chain; its full sequence is Aspartyl/glutamyl-tRNA(Asn/Gln) amidotransferase subunit C (94 aa).

It belongs to the GatC family. Heterotrimer of A, B and C subunits.

The catalysed reaction is L-glutamyl-tRNA(Gln) + L-glutamine + ATP + H2O = L-glutaminyl-tRNA(Gln) + L-glutamate + ADP + phosphate + H(+). It carries out the reaction L-aspartyl-tRNA(Asn) + L-glutamine + ATP + H2O = L-asparaginyl-tRNA(Asn) + L-glutamate + ADP + phosphate + 2 H(+). Functionally, allows the formation of correctly charged Asn-tRNA(Asn) or Gln-tRNA(Gln) through the transamidation of misacylated Asp-tRNA(Asn) or Glu-tRNA(Gln) in organisms which lack either or both of asparaginyl-tRNA or glutaminyl-tRNA synthetases. The reaction takes place in the presence of glutamine and ATP through an activated phospho-Asp-tRNA(Asn) or phospho-Glu-tRNA(Gln). This Desulfotalea psychrophila (strain LSv54 / DSM 12343) protein is Aspartyl/glutamyl-tRNA(Asn/Gln) amidotransferase subunit C.